The following is a 155-amino-acid chain: Anaerobic ribonucleoside-triphosphate reductase-activating protein (155 aa).

[4Fe-4S] cluster contacts are provided by Cys26, Cys30, and Cys33. S-adenosyl-L-methionine contacts are provided by residues 32 to 34 and Gly74; that span reads GCY.

It belongs to the organic radical-activating enzymes family. As to quaternary structure, forms a tetramer composed of two NrdD and two NrdG subunits. The cofactor is [4Fe-4S] cluster.

The protein resides in the cytoplasm. The enzyme catalyses glycyl-[protein] + reduced [flavodoxin] + S-adenosyl-L-methionine = glycin-2-yl radical-[protein] + semiquinone [flavodoxin] + 5'-deoxyadenosine + L-methionine + H(+). Activation of anaerobic ribonucleoside-triphosphate reductase under anaerobic conditions by generation of an organic free radical, using S-adenosylmethionine and reduced flavodoxin as cosubstrates to produce 5'-deoxy-adenosine. The protein is Anaerobic ribonucleoside-triphosphate reductase-activating protein (nrdG) of Haemophilus influenzae (strain ATCC 51907 / DSM 11121 / KW20 / Rd).